The chain runs to 134 residues: Seminal plasma protein PDC-109 (134 aa).

The first 25 residues, 1–25, serve as a signal peptide directing secretion; that stretch reads MALQLGLFLIWAGVSVFLQLDPVNG. T36 carries an O-linked (GalNAc...) threonine glycan. 2 Fibronectin type-II domains span residues 44–88 and 89–134; these read PEDE…YCAQ and RDYA…WKYC. Disulfide bonds link C49-C73, C63-C86, C94-C119, and C108-C134.

Belongs to the seminal plasma protein family. In terms of assembly, homodimer. In terms of processing, O-linked glycan consists of Gal-GalNAc disaccharide which is modified with a sialic acid residue (macro- and/or microheterogeneity account for differences between BSP-A1 and BSP-A2). As to expression, major component of seminal plasma.

The protein localises to the secreted. Its function is as follows. Could enhance the fertilizing capacity of bull spermatozoa upon interaction with heparin-like glycosaminoglycans present in the female genital tract. Exhibits both simulatory and inhibitory actions on the release of pituitary gonadotropins. The sequence is that of Seminal plasma protein PDC-109 from Bos taurus (Bovine).